A 720-amino-acid chain; its full sequence is Fatty acid oxidation complex subunit alpha (720 aa).

Residues 1–189 (MIYQGETLSV…KLGLVDAVVA (189 aa)) form an enoyl-CoA hydratase/isomerase region. Aspartate 296 serves as a coordination point for substrate. Positions 311 to 720 (QPTKKGVVLG…ESYYTQQVNA (410 aa)) are 3-hydroxyacyl-CoA dehydrogenase. Residues methionine 324, aspartate 343, 400–402 (VVE), lysine 407, and serine 429 each bind NAD(+). Residue histidine 450 is the For 3-hydroxyacyl-CoA dehydrogenase activity of the active site. Residue asparagine 453 coordinates NAD(+). The substrate site is built by asparagine 500 and tyrosine 660.

It in the N-terminal section; belongs to the enoyl-CoA hydratase/isomerase family. In the C-terminal section; belongs to the 3-hydroxyacyl-CoA dehydrogenase family. In terms of assembly, heterotetramer of two alpha chains (FadB) and two beta chains (FadA).

It catalyses the reaction a (3S)-3-hydroxyacyl-CoA + NAD(+) = a 3-oxoacyl-CoA + NADH + H(+). The enzyme catalyses a (3S)-3-hydroxyacyl-CoA = a (2E)-enoyl-CoA + H2O. It carries out the reaction a 4-saturated-(3S)-3-hydroxyacyl-CoA = a (3E)-enoyl-CoA + H2O. The catalysed reaction is (3S)-3-hydroxybutanoyl-CoA = (3R)-3-hydroxybutanoyl-CoA. It catalyses the reaction a (3Z)-enoyl-CoA = a 4-saturated (2E)-enoyl-CoA. The enzyme catalyses a (3E)-enoyl-CoA = a 4-saturated (2E)-enoyl-CoA. Its pathway is lipid metabolism; fatty acid beta-oxidation. In terms of biological role, involved in the aerobic and anaerobic degradation of long-chain fatty acids via beta-oxidation cycle. Catalyzes the formation of 3-oxoacyl-CoA from enoyl-CoA via L-3-hydroxyacyl-CoA. It can also use D-3-hydroxyacyl-CoA and cis-3-enoyl-CoA as substrate. In Photobacterium profundum (strain SS9), this protein is Fatty acid oxidation complex subunit alpha.